We begin with the raw amino-acid sequence, 104 residues long: L-rhamnose mutarotase (104 aa).

Y18 lines the substrate pocket. H22 serves as the catalytic Proton donor. Substrate is bound by residues Y41 and 76-77 (WW).

This sequence belongs to the rhamnose mutarotase family. As to quaternary structure, homodimer.

The protein localises to the cytoplasm. It carries out the reaction alpha-L-rhamnose = beta-L-rhamnose. Its pathway is carbohydrate metabolism; L-rhamnose metabolism. Functionally, involved in the anomeric conversion of L-rhamnose. In Escherichia coli O17:K52:H18 (strain UMN026 / ExPEC), this protein is L-rhamnose mutarotase.